Here is a 285-residue protein sequence, read N- to C-terminus: Inositol polyphosphate 1-phosphatase (285 aa).

Glutamate 68, aspartate 106, leucine 108, and aspartate 109 together coordinate Mg(2+). Positions 109, 110, 111, 173, 195, 197, and 200 each coordinate 1D-myo-inositol 1,4-bisphosphate. Aspartate 223 is a binding site for Mg(2+).

The protein belongs to the inositol monophosphatase superfamily. In terms of assembly, monomer. The cofactor is Mg(2+).

The protein localises to the cytoplasm. The catalysed reaction is 1D-myo-inositol 1,4-bisphosphate + H2O = 1D-myo-inositol 4-phosphate + phosphate. It carries out the reaction adenosine 3',5'-bisphosphate + H2O = AMP + phosphate. Partially inhibited by Li(2+). Functionally, catalyzes the hydrolysis of the 1-position phosphate from inositol 1,4-bisphosphate. Is also able to convert 3'(2')-phosphoadenosine 5'-phosphate (PAP) to AMP but with less efficiency. This chain is Inositol polyphosphate 1-phosphatase, found in Entamoeba histolytica (strain ATCC 30459 / HM-1:IMSS / ABRM).